Consider the following 342-residue polypeptide: Isopentenyl-diphosphate delta-isomerase (342 aa).

12-13 (RK) contacts substrate. FMN-binding positions include 71–73 (AMT), Ser101, and Asn129. 101 to 103 (SQR) is a binding site for substrate. A substrate-binding site is contributed by Gln163. A Mg(2+)-binding site is contributed by Glu164. FMN is bound by residues Lys195, Thr225, 272–274 (GIR), and 293–294 (AR).

Belongs to the IPP isomerase type 2 family. As to quaternary structure, homooctamer. Dimer of tetramers. FMN is required as a cofactor. Requires NADPH as cofactor. Mg(2+) serves as cofactor.

Its subcellular location is the cytoplasm. The catalysed reaction is isopentenyl diphosphate = dimethylallyl diphosphate. Involved in the biosynthesis of isoprenoids. Catalyzes the 1,3-allylic rearrangement of the homoallylic substrate isopentenyl (IPP) to its allylic isomer, dimethylallyl diphosphate (DMAPP). In Mycolicibacterium gilvum (strain PYR-GCK) (Mycobacterium gilvum (strain PYR-GCK)), this protein is Isopentenyl-diphosphate delta-isomerase.